A 159-amino-acid polypeptide reads, in one-letter code: MISKNVRIAKGAVIVGDVTIGDYSSVWYNAVIRGDVDKIIIGNYSNIQDCCVVHCSKGYPTIIGDYVSIGHGAVIHGCRIEDNVLVGMNATILNGAKIGENCIIGANALVTQNKEIPPNSLVLGVPGRVVRELTEEEIKSIKENALRYVKLSETLESYK.

Substrate-binding positions include 33-35 (RGD) and 48-49 (QD). The Zn(2+) site is built by histidine 54, histidine 71, and histidine 76.

This sequence belongs to the gamma-class carbonic anhydrase family. Zn(2+) is required as a cofactor.

The enzyme catalyses hydrogencarbonate + H(+) = CO2 + H2O. In terms of biological role, probably reversibly hydrates carbon dioxide. This is Probable carbonic anhydrase from Methanocaldococcus jannaschii (strain ATCC 43067 / DSM 2661 / JAL-1 / JCM 10045 / NBRC 100440) (Methanococcus jannaschii).